A 601-amino-acid chain; its full sequence is Transcription factor Ken (601 aa).

Residues 33-101 (ADLTIVCENK…LYSGQTCITS (69 aa)) enclose the BTB domain. 3 disordered regions span residues 188–276 (AAEC…TINP), 331–365 (LSDGSDINSSPENYVVTPHRKRRPGFHNTQSDNQP), and 471–491 (DHPEGRSGSASGSGANLAGSN). Basic and acidic residues-rich tracts occupy residues 190 to 200 (ECERSGGHNNK) and 207 to 216 (CTHKDNKSDK). Over residues 223–234 (NLSNAPPSGTSG) the composition is skewed to polar residues. Residues 235–247 (SNSNISTSSNHQQ) are compositionally biased toward low complexity. Basic residues predominate over residues 248 to 258 (QQHHHHHHHNH). The span at 259-275 (NNNNNNNNNNSSSSTIN) shows a compositional bias: low complexity. The segment covering 476–490 (RSGSASGSGANLAGS) has biased composition (low complexity). 3 consecutive C2H2-type zinc fingers follow at residues 500 to 522 (YRCEYCGKQFGMSWNLKTHLRVH), 528 to 551 (FACRLCVAMFKQKAHLLKHLCSVH), and 567 to 590 (YSCCFCSMCFESVQELVRHLSGHH).

As to expression, expressed from stage 5 in two rather faint stripes at positions of 64% (anterior domain; AD) and 17% (posterior domain; PD) egg length. During early gastrulation, at stage 6, these two stripes become more evident and detectable at the region posterior to the cephalic furrow and in the hindgut primordium. The AD disappears as gastrulation proceeds, while the PD remains. At stage 15, the AD appears again in the foregut, and PD expression in the hindgut and anal pad. In imaginal disks, it is ubiquitously expressed in both males and females in genital and eye-antennal disks. Not expressed in the brain. In genital disks, it is expressed along the margin of the anterior bulbus in males, while in females it is expressed in the posterior compartment along the anterior-posterior border, with medial expansion in the most posterior region.

The protein localises to the nucleus. In terms of biological role, transcription factor required for terminalia development. Negative regulator of the JAK/STAT pathway: represses JAK/STAT-dependent expression of ventral veins lacking (vvl) in the posterior spiracles. This chain is Transcription factor Ken (ken), found in Drosophila melanogaster (Fruit fly).